Consider the following 179-residue polypeptide: MARLQEHYQTVVKKALLEKFQYGNVMEIPRLEKIVINMGVGEASQDRKLIEGALTDMTAISGQKPIITRAKKSIAAFKLREQMIVGCKVTLRRDRMFEFLDRLVTIALPRVRDFRGVSAKSFDGRGNYNMGLKEQIVFPEIDYDRVDKVRGMDITICTSAKSDEEAKALLEGFAMPFMK.

Belongs to the universal ribosomal protein uL5 family. Part of the 50S ribosomal subunit; part of the 5S rRNA/L5/L18/L25 subcomplex. Contacts the 5S rRNA and the P site tRNA. Forms a bridge to the 30S subunit in the 70S ribosome.

Its function is as follows. This is one of the proteins that bind and probably mediate the attachment of the 5S RNA into the large ribosomal subunit, where it forms part of the central protuberance. In the 70S ribosome it contacts protein S13 of the 30S subunit (bridge B1b), connecting the 2 subunits; this bridge is implicated in subunit movement. Contacts the P site tRNA; the 5S rRNA and some of its associated proteins might help stabilize positioning of ribosome-bound tRNAs. The chain is Large ribosomal subunit protein uL5 from Rhodospirillum rubrum (strain ATCC 11170 / ATH 1.1.1 / DSM 467 / LMG 4362 / NCIMB 8255 / S1).